The primary structure comprises 914 residues: Zinc finger protein 717 (914 aa).

The KRAB domain occupies 22–93 (VSFEEVAVHF…EETPNLRLSA (72 aa)). The C2H2-type 1; degenerate zinc-finger motif lies at 209–231 (FQCNEQGKTFNTEAMFFIHKRVH). The C2H2-type 2; degenerate zinc-finger motif lies at 266–277 (RKSDFTKHQQTH). The C2H2-type 3; degenerate zinc-finger motif lies at 283 to 305 (YECVECEKPSISKSDLMLQCKMP). 12 C2H2-type zinc fingers span residues 311-333 (YACNWCEKLFSYKSSLIIHQRIH), 339-361 (YGCNECGKTFRRKSFLTLHERTH), 367-389 (YKCIECGKTFHCKSLLTLHHRTH), 395-417 (YQCSECGKTFSQKSYLTIHHRTH), 423-445 (YACDHCEEAFSHKSRLTVHQRTH), 451-473 (YECNECGKPFINKSNLRLHQRTH), 479-501 (YECNECGKTFHRKSFLTIHQWTH), 507-529 (YECNECGKTFRCKSFLTVHQRTH), 535-557 (YACNECGKTYSHKSYLTVHHRTH), 563-585 (YECNECGKSFHCKSFLTIHQRTH), 591-613 (YECNECEKTFINKLNLGIHKRTH), and 619-641 (YECNECGKTFRQKSNLSTHQGTH). The C2H2-type 16; degenerate zinc-finger motif lies at 649 to 669 (CNECGKTFHRKSFLTIHQRTH). The segment at 741-752 (QKSVLTVHHRTH) adopts a C2H2-type 17; degenerate zinc-finger fold. 5 C2H2-type zinc fingers span residues 758–780 (YECNECGKTFCHKSNLSTHQGTH), 786–808 (YECDECRKTFYDKTVLTIHQRTH), 814–836 (FECKECRKTFSQKSKLFVHHRTH), 842–864 (FRCNECRKTFSQKSGLSIHQRTH), and 870–892 (YECKECGKTFCQKSHLSRHQQTH).

The protein belongs to the krueppel C2H2-type zinc-finger protein family.

It localises to the nucleus. May be involved in transcriptional regulation. The chain is Zinc finger protein 717 from Homo sapiens (Human).